Reading from the N-terminus, the 703-residue chain is NADH-quinone oxidoreductase chain 12 (703 aa).

16 helical membrane passes run 4 to 24 (FVLF…RAIG), 30 to 50 (YLTT…FLSF), 79 to 99 (LTAI…MYSL), 116 to 136 (ARFF…VTAD), 138 to 158 (LLQM…LIGF), 179 to 199 (GDFG…SVQF), 224 to 244 (ANLL…QLLL), 256 to 276 (TPVS…FLVC), 290 to 310 (NFIV…GLVQ), 325 to 345 (LGYM…FHLL), 346 to 366 (THAF…HAMH), 381 to 401 (IPLT…VGIP), 415 to 435 (AIIE…VIAA), 475 to 495 (LGVL…PFFG), 580 to 600 (VSPF…YIAN), and 679 to 699 (LFHY…WVMM).

Belongs to the complex I subunit 5 family. NDH-1 is composed of at least 14 different subunits, Nqo1 to Nqo14. The complex has a L-shaped structure, with the hydrophobic arm (subunits Nqo7, Nqo8, Nqo10 to Nqo14) embedded in the inner membrane and the hydrophilic peripheral arm (subunits Nqo1 to Nqo6, Nqo9) protruding into the bacterial cytoplasm. The hydrophilic domain contains all the redox centers.

The protein localises to the cell inner membrane. The enzyme catalyses a quinone + NADH + 5 H(+)(in) = a quinol + NAD(+) + 4 H(+)(out). NDH-1 shuttles electrons from NADH, via FMN and iron-sulfur (Fe-S) centers, to quinones in the respiratory chain. The immediate electron acceptor for the enzyme in this species is believed to be ubiquinone. Couples the redox reaction to proton translocation (for every two electrons transferred, four hydrogen ions are translocated across the cytoplasmic membrane), and thus conserves the redox energy in a proton gradient. In Paracoccus denitrificans, this protein is NADH-quinone oxidoreductase chain 12.